A 513-amino-acid chain; its full sequence is ATP synthase subunit alpha (513 aa).

169–176 is an ATP binding site; sequence GDRQTGKT.

This sequence belongs to the ATPase alpha/beta chains family. As to quaternary structure, F-type ATPases have 2 components, CF(1) - the catalytic core - and CF(0) - the membrane proton channel. CF(1) has five subunits: alpha(3), beta(3), gamma(1), delta(1), epsilon(1). CF(0) has three main subunits: a(1), b(2) and c(9-12). The alpha and beta chains form an alternating ring which encloses part of the gamma chain. CF(1) is attached to CF(0) by a central stalk formed by the gamma and epsilon chains, while a peripheral stalk is formed by the delta and b chains.

The protein localises to the cell inner membrane. The catalysed reaction is ATP + H2O + 4 H(+)(in) = ADP + phosphate + 5 H(+)(out). In terms of biological role, produces ATP from ADP in the presence of a proton gradient across the membrane. The alpha chain is a regulatory subunit. In Vibrio cholerae serotype O1 (strain ATCC 39541 / Classical Ogawa 395 / O395), this protein is ATP synthase subunit alpha.